A 306-amino-acid polypeptide reads, in one-letter code: Curved DNA-binding protein (306 aa).

The J domain maps to 5-69 (DYYAIMGVKP…QRRAEYDQMW (65 aa)).

It is found in the cytoplasm. The protein resides in the nucleoid. DNA-binding protein that preferentially recognizes a curved DNA sequence. It is probably a functional analog of DnaJ; displays overlapping activities with DnaJ, but functions under different conditions, probably acting as a molecular chaperone in an adaptive response to environmental stresses other than heat shock. Lacks autonomous chaperone activity; binds native substrates and targets them for recognition by DnaK. Its activity is inhibited by the binding of CbpM. In Escherichia coli (strain SMS-3-5 / SECEC), this protein is Curved DNA-binding protein.